The sequence spans 366 residues: D-alanine--D-alanine ligase A (366 aa).

One can recognise an ATP-grasp domain in the interval 145-348; the sequence is KRLLRDAGLK…YRELITALIE (204 aa). 175–230 is a binding site for ATP; it reads VEQLGLPLFVKPANQGSSVGVSKVKREADLRAALDEAFRYDHKVLVEQAVIGREIE. Positions 302, 315, and 317 each coordinate Mg(2+).

It belongs to the D-alanine--D-alanine ligase family. Mg(2+) serves as cofactor. The cofactor is Mn(2+).

The protein localises to the cytoplasm. It carries out the reaction 2 D-alanine + ATP = D-alanyl-D-alanine + ADP + phosphate + H(+). Its pathway is cell wall biogenesis; peptidoglycan biosynthesis. Functionally, cell wall formation. The sequence is that of D-alanine--D-alanine ligase A from Chromobacterium violaceum (strain ATCC 12472 / DSM 30191 / JCM 1249 / CCUG 213 / NBRC 12614 / NCIMB 9131 / NCTC 9757 / MK).